A 398-amino-acid chain; its full sequence is Protein RecA (398 aa).

83–90 contacts ATP; it reads GPESSGKT. The disordered stretch occupies residues 351-398; that stretch reads AGQKNDKKSKLEEKANAGAGISEASEPDSSAEEDFEEFAPIDIGSLGE. Over residues 354–365 the composition is skewed to basic and acidic residues; the sequence is KNDKKSKLEEKA. Residues 375–389 are compositionally biased toward acidic residues; sequence SEPDSSAEEDFEEFA.

This sequence belongs to the RecA family.

Its subcellular location is the cytoplasm. Functionally, can catalyze the hydrolysis of ATP in the presence of single-stranded DNA, the ATP-dependent uptake of single-stranded DNA by duplex DNA, and the ATP-dependent hybridization of homologous single-stranded DNAs. It interacts with LexA causing its activation and leading to its autocatalytic cleavage. This is Protein RecA from Ruminococcus albus (strain ATCC 27210 / DSM 20455 / JCM 14654 / NCDO 2250 / 7).